A 457-amino-acid polypeptide reads, in one-letter code: Gustatory and odorant receptor 24 (457 aa).

Over Met-1–Pro-115 the chain is Cytoplasmic. Residues Ser-116–Leu-136 form a helical membrane-spanning segment. The Extracellular segment spans residues Asn-137–Ser-152. The helical transmembrane segment at Val-153–Tyr-173 threads the bilayer. Residues Glu-174–Gln-209 are Cytoplasmic-facing. The chain crosses the membrane as a helical span at residues Val-210–Met-230. The Extracellular segment spans residues Val-231–Gln-237. A helical membrane pass occupies residues Val-238–Ala-258. The Cytoplasmic portion of the chain corresponds to Cys-259–Tyr-309. A helical transmembrane segment spans residues Thr-310–Met-330. Topologically, residues Ser-331 to Asp-341 are extracellular. Residues Ile-342 to Ala-362 form a helical membrane-spanning segment. At His-363 to Lys-421 the chain is on the cytoplasmic side. A helical transmembrane segment spans residues Ser-422 to Pro-442. The Extracellular segment spans residues Asp-443–Ser-457. N-linked (GlcNAc...) asparagine glycosylation occurs at Asn-453.

This sequence belongs to the insect chemoreceptor superfamily. Gustatory receptor (GR) family. Gr21a subfamily. Carbon dioxide-responsive neurons coexpress GPRgr22 and GPRgr24 in the maxillary palp, at both larval and adult life stages.

It localises to the cell membrane. Functionally, gustatory receptor which mediates acceptance or avoidance behavior, depending on its substrates. GPRgr22 and GPRgr24 together are sufficient for olfactory carbon dioxide-chemosensation. The sequence is that of Gustatory and odorant receptor 24 from Anopheles gambiae (African malaria mosquito).